We begin with the raw amino-acid sequence, 491 residues long: Sodium-dependent glucose transporter 1 (491 aa).

Helical transmembrane passes span 26 to 46 (FIFV…GILF), 52 to 72 (HLLL…VPWC), 81 to 101 (VMSV…IIIL), 119 to 139 (FALG…FLPL), 165 to 185 (LSYI…FILF), 210 to 230 (AVIF…VAYG), 255 to 275 (LFWG…TCLY), 277 to 297 (GTML…LVLF), 303 to 323 (LLWV…PSGF), 338 to 358 (SLFV…VGYL), and 365 to 385 (FPVL…LFPV). Disordered regions lie at residues 397 to 425 (AQYN…DEAQ) and 438 to 491 (NDQM…EKND). Acidic residues predominate over residues 416-425 (MEEEDEDEAQ). The span at 440-458 (QMKNSVTVISEDTPGNSAP) shows a compositional bias: polar residues.

This sequence belongs to the major facilitator superfamily.

The protein resides in the apical cell membrane. Its function is as follows. May function as a sodium-dependent glucose transporter. Potential channels for urea in the inner medulla of kidney. This Xenopus laevis (African clawed frog) protein is Sodium-dependent glucose transporter 1 (mfsd4b).